We begin with the raw amino-acid sequence, 196 residues long: MSEAITPTAMKTLFTEARTHNGWQEMPVSDETLREIYDLMKWGPTSANCSPARIVFVRTPEGKEKLRPSLSSGNLAKTLAAPVTAIIAWDSEFYERLPELFPHGDARSWFTSSPALAEETAFRNSAMQAAYLIFACRALGLDTGPMSGFDRQKVDEAFFTGTTLKSNLLINIGYGDFSKVYGRLPRLSFEDACGLV.

This sequence belongs to the nitroreductase family. HadB/RutE subfamily. The cofactor is FMN.

It catalyses the reaction 3-hydroxypropanoate + NADP(+) = 3-oxopropanoate + NADPH + H(+). Its function is as follows. May reduce toxic product malonic semialdehyde to 3-hydroxypropionic acid, which is excreted. The chain is Probable malonic semialdehyde reductase RutE from Enterobacter sp. (strain 638).